The chain runs to 354 residues: Ferrochelatase (354 aa).

Fe cation-binding residues include His204 and Glu306.

The protein belongs to the ferrochelatase family.

Its subcellular location is the cytoplasm. The catalysed reaction is heme b + 2 H(+) = protoporphyrin IX + Fe(2+). It participates in porphyrin-containing compound metabolism; protoheme biosynthesis; protoheme from protoporphyrin-IX: step 1/1. In terms of biological role, catalyzes the ferrous insertion into protoporphyrin IX. In Coxiella burnetii (strain CbuG_Q212) (Coxiella burnetii (strain Q212)), this protein is Ferrochelatase.